The chain runs to 731 residues: Small conductance calcium-activated potassium channel protein 3 (731 aa).

Residues 1 to 11 show a composition bias toward basic and acidic residues; that stretch reads MDTSGHFHDSG. Disordered regions lie at residues 1–170 and 239–258; these read MDTS…SNPF and ATHNHQHAGTTASSTTFPKA. The span at 30-40 shows a compositional bias: low complexity; the sequence is QQQQQQQQQQQ. The span at 41-51 shows a compositional bias: pro residues; it reads QPPPPAPPAAP. Low complexity predominate over residues 52–95; the sequence is QQPLGPSLQPQPPQLQQQQQQQQQQQQQQPPHPLSQLAQLQSQP. The segment covering 112–132 has biased composition (polar residues); the sequence is PSSNSTAILHPSSRQGSQLNL. Residues 138–147 show a composition bias toward low complexity; the sequence is GHSPSSTATS. Ser-167 carries the phosphoserine modification. Residues 239 to 256 show a composition bias toward polar residues; that stretch reads ATHNHQHAGTTASSTTFP. Residues 288 to 308 form a helical membrane-spanning segment; the sequence is LIFGMFGIVVMVIETELSWGL. A helical membrane pass occupies residues 315-335; that stretch reads FSLALKCLISLSTIILLGLII. Residues 366 to 386 form a helical membrane-spanning segment; the sequence is ISLEMLVCAIHPIPGEYKFFW. Residues 405–425 form a helical membrane-spanning segment; sequence IILSIPMFLRLYLIARVMLLH. The helical transmembrane segment at 454–474 threads the bilayer; sequence LMTICPGTVLLVFSISLWIIA. The segment at residues 494 to 514 is an intramembrane region (pore-forming); that stretch reads FLGAMWLISITFLSIGYGDMV. Residues 523-543 form a helical membrane-spanning segment; sequence VCLLTGIMGAGCTALVVAVVA. A calmodulin-binding region spans residues 561 to 637; that stretch reads DTQLTKRIKN…LVDLSKMQNV (77 aa). A coiled-coil region spans residues 642 to 669; the sequence is ITELNDRSEDLEKQIGSLESKLEHLTAS. A disordered region spans residues 709–731; sequence ISDSPIGVSSTSFPTPYTSSSSC. The span at 717 to 731 shows a compositional bias: low complexity; the sequence is SSTSFPTPYTSSSSC.

Belongs to the potassium channel KCNN family. KCa2.3/KCNN3 subfamily. In terms of assembly, homodimer. Heteromultimer with KCNN2 or KCNN1; this modulates plasma membrane expression and consequently the small conductance calcium-activated potassium channel activity. The complex is composed of 4 channel subunits each of which binds to a calmodulin subunit which regulates the channel activity through calcium-binding. Interacts with CALM1. As to expression, widely distributed in human tissues and is present at 20-60% of KCNN3 in the brain.

Its subcellular location is the cell membrane. It is found in the cytoplasm. The protein localises to the myofibril. It localises to the sarcomere. The protein resides in the z line. It carries out the reaction K(+)(in) = K(+)(out). Its activity is regulated as follows. Inhibited by bee venom neurotoxin apamin. Its function is as follows. Small conductance calcium-activated potassium channel that mediates the voltage-independent transmembrane transfer of potassium across the cell membrane through a constitutive interaction with calmodulin which binds the intracellular calcium allowing its opening. The current is characterized by a voltage-independent activation, an intracellular calcium concentration increase-dependent activation and a single-channel conductance of 10 picosiemens. Also presents an inwardly rectifying current, thus reducing its already small outward conductance of potassium ions, which is particularly the case when the membrane potential displays positive values, above + 20 mV. Activation is followed by membrane hyperpolarization. Thought to regulate neuronal excitability by contributing to the slow component of synaptic afterhyperpolarization. Functionally, does not function as a small conductance calcium-activated potassium channel. Selectively suppresses endogenous KCNN3 currents, in a dominant-negative fashion by decreasing the abundance of functional channels in the plasma membrane, possibly by selectively coassembling with and sequestering native KCNN3 protein in intracellular compartments. This dominant inhibitory effect extends to other members of the SK subfamily. The protein is Small conductance calcium-activated potassium channel protein 3 of Homo sapiens (Human).